The primary structure comprises 678 residues: MVPSTFSRLKAARCLPVVLAALIFAGCGTHTPDQSTAYMQGTAQADSAFYLQQMQQSSDDTRINWQLLAIRALVKEGKTGQAVELFNQLPQELNDSQRREKTLLAVEIKLAQKDFAGAQNLLAKITPADLEQNQQARYWQAKIDASQGRPSIDLLRALIAQEPLLGAKEKKQNIDATWQALSSMTQEQANTLVINADENILQGWLDLQRVWFDNRNDPDMMKAGIADWQKRYPNNPGAKMLPTQLVNVKAFKPASTNKIALLLPLNGQAAVFGRTIQQGFEAAKNIGTQPVAAQVAAAPAADVAEQPQPQTVDGVASPAQASVSDLTGDQPAAQPVPVSAPATSTAAVSAPANPSAELKIYDTSSQPLSQILSQVQQDGASIVVGPLLKNNVEELLKSNTPLNVLALNQPENIENRVNICYFALSPEDEARDAARHIRDQGKQAPLVLIPRSSLGDRVANAFAQEWQKLGGGTVLQQKFGSTSELRAGVNGGSGIALTGTPITPRATTDSGMTTNNPTLQTTPTDDQFTNNGGRVDAVYIVATPGEIAFIKPMIAMRNGSQSGAMLYASSRSAQGTAGPDFRLEMEGLQYSEIPMLAGGNLPLMQQALSAVNNDYSLARMYAMGVDAWSLANHFSQMRQVQGFEINGNTGSLTANPDCVINRKLSWLQYQQGQVVPVS.

The signal sequence occupies residues 1–26; it reads MVPSTFSRLKAARCLPVVLAALIFAG. C27 carries the N-palmitoyl cysteine lipid modification. C27 carries the S-diacylglycerol cysteine lipid modification. 2 disordered regions span residues 302–340 and 496–528; these read DVAE…PVSA and ALTG…DDQF. 2 stretches are compositionally biased toward low complexity: residues 330 to 340 and 513 to 528; these read QPAAQPVPVSA and TTNN…DDQF.

Belongs to the LpoA family. Interacts with PBP1a.

It localises to the cell outer membrane. Regulator of peptidoglycan synthesis that is essential for the function of penicillin-binding protein 1A (PBP1a). The protein is Penicillin-binding protein activator LpoA of Shigella sonnei (strain Ss046).